The sequence spans 462 residues: tRNA-2-methylthio-N(6)-dimethylallyladenosine synthase (462 aa).

The MTTase N-terminal domain maps to Arg-18–Ser-138. Residues Cys-27, Cys-63, Cys-101, Cys-179, Cys-183, and Cys-186 each contribute to the [4Fe-4S] cluster site. A Radical SAM core domain is found at Arg-165–Ala-397. The TRAM domain occupies Asp-400–Ala-462.

This sequence belongs to the methylthiotransferase family. MiaB subfamily. Monomer. The cofactor is [4Fe-4S] cluster.

The protein resides in the cytoplasm. It carries out the reaction N(6)-dimethylallyladenosine(37) in tRNA + (sulfur carrier)-SH + AH2 + 2 S-adenosyl-L-methionine = 2-methylsulfanyl-N(6)-dimethylallyladenosine(37) in tRNA + (sulfur carrier)-H + 5'-deoxyadenosine + L-methionine + A + S-adenosyl-L-homocysteine + 2 H(+). Its function is as follows. Catalyzes the methylthiolation of N6-(dimethylallyl)adenosine (i(6)A), leading to the formation of 2-methylthio-N6-(dimethylallyl)adenosine (ms(2)i(6)A) at position 37 in tRNAs that read codons beginning with uridine. This chain is tRNA-2-methylthio-N(6)-dimethylallyladenosine synthase, found in Brucella anthropi (strain ATCC 49188 / DSM 6882 / CCUG 24695 / JCM 21032 / LMG 3331 / NBRC 15819 / NCTC 12168 / Alc 37) (Ochrobactrum anthropi).